Consider the following 272-residue polypeptide: Bis(5'-nucleosyl)-tetraphosphatase, symmetrical (272 aa).

It belongs to the Ap4A hydrolase family.

The catalysed reaction is P(1),P(4)-bis(5'-adenosyl) tetraphosphate + H2O = 2 ADP + 2 H(+). In terms of biological role, hydrolyzes diadenosine 5',5'''-P1,P4-tetraphosphate to yield ADP. In Shewanella frigidimarina (strain NCIMB 400), this protein is Bis(5'-nucleosyl)-tetraphosphatase, symmetrical.